Reading from the N-terminus, the 281-residue chain is Sorbose reductase SOU1 (281 aa).

3 residues coordinate NADP(+): I47, K74, and N119. Active-site proton donor residues include S173 and Y188. NADP(+) contacts are provided by Y188, K192, I221, and T223. K192 acts as the Lowers pKa of active site Tyr in catalysis.

Belongs to the short-chain dehydrogenases/reductases (SDR) family. As to quaternary structure, homotetramer.

It carries out the reaction D-sorbitol + NADP(+) = keto-L-sorbose + NADPH + H(+). It participates in carbohydrate degradation; L-sorbose degradation. Its function is as follows. Catalyzes the NADP dependent reduction of L-sorbose to D-glucitol. Can also convert fructose to mannitol, but less efficiently. The chain is Sorbose reductase SOU1 (SOU1) from Candida albicans (strain SC5314 / ATCC MYA-2876) (Yeast).